A 192-amino-acid polypeptide reads, in one-letter code: METGRPNLFFVGLMGAGKTTVGRTVARRLHYPFFDSDHELEAHCGVRIPVIFEHEGEEGFRDREAAMIRELTGRSGIVLATGGGAVLRPENRELLKSRGTVVYLRASPHDLWLRTRHDRNRPLLQTEDPKGKLEALYGARDPLYREVADFIIETGKPSVAQLANMVLMQLEMAGFRIDTAAASDQPANDTHS.

15–20 contacts ATP; sequence GAGKTT. Threonine 19 contributes to the Mg(2+) binding site. Substrate contacts are provided by aspartate 37, arginine 61, and glycine 83. Arginine 121 serves as a coordination point for ATP. Arginine 140 contacts substrate.

This sequence belongs to the shikimate kinase family. Monomer. The cofactor is Mg(2+).

It is found in the cytoplasm. It catalyses the reaction shikimate + ATP = 3-phosphoshikimate + ADP + H(+). Its pathway is metabolic intermediate biosynthesis; chorismate biosynthesis; chorismate from D-erythrose 4-phosphate and phosphoenolpyruvate: step 5/7. In terms of biological role, catalyzes the specific phosphorylation of the 3-hydroxyl group of shikimic acid using ATP as a cosubstrate. The polypeptide is Shikimate kinase (Cupriavidus pinatubonensis (strain JMP 134 / LMG 1197) (Cupriavidus necator (strain JMP 134))).